A 251-amino-acid polypeptide reads, in one-letter code: Putative F-box protein L166 (251 aa).

Residues M1 to I46 form the F-box domain. The tract at residues P188–R251 is disordered. The span at T202–I217 shows a compositional bias: polar residues. A compositionally biased stretch (basic residues) spans K241–R251.

This Acanthamoeba polyphaga (Amoeba) protein is Putative F-box protein L166.